The chain runs to 395 residues: Phosphoglycerate kinase (395 aa).

Substrate-binding positions include 21–23 (DLN), Arg-36, 59–62 (HLGR), Arg-114, and Arg-147. ATP contacts are provided by residues Lys-198, Glu-320, and 346 to 349 (GGDT).

It belongs to the phosphoglycerate kinase family. As to quaternary structure, monomer.

The protein localises to the cytoplasm. It catalyses the reaction (2R)-3-phosphoglycerate + ATP = (2R)-3-phospho-glyceroyl phosphate + ADP. Its pathway is carbohydrate degradation; glycolysis; pyruvate from D-glyceraldehyde 3-phosphate: step 2/5. The protein is Phosphoglycerate kinase of Nitrosospira multiformis (strain ATCC 25196 / NCIMB 11849 / C 71).